We begin with the raw amino-acid sequence, 648 residues long: Transcription initiation factor TFIID subunit 5 (648 aa).

Over residues 1-13 (MDSENSSSHSISS) the composition is skewed to low complexity. A disordered region spans residues 1–21 (MDSENSSSHSISSPQMFQNTH). The LisH domain occupies 35–67 (MNNESLQMIIGYLRRNGLTETEELLTREAGPVL). WD repeat units lie at residues 317–358 (NAPI…KKLR), 392–431 (GHGG…NAVI), 433–472 (RTPA…PLRI), 475–514 (DPYG…RVRI), 517–556 (GHKA…LVAA), and 560–599 (EQAG…GTVL).

The protein belongs to the WD repeat TAF5 family. In terms of assembly, component of the TFIID basal transcription factor complex, composed of TATA-box-binding protein tbp-1, and a number of TBP-associated factors (TAFs).

It is found in the nucleus. In terms of biological role, the TFIID basal transcription factor complex plays a major role in the initiation of RNA polymerase II (Pol II)-dependent transcription. TFIID recognizes and binds promoters via its subunit tbp-1, a TATA-box-binding protein, and promotes assembly of the pre-initiation complex (PIC). The TFIID complex consists of tbp-1 and TBP-associated factors (TAFs), including taf-5. Essential for early embryonic development, but not required for transcription of some genes; probably acts via activating transcription initiation by RNA Pol II, as part of the TFIID complex. The sequence is that of Transcription initiation factor TFIID subunit 5 from Caenorhabditis elegans.